The primary structure comprises 181 residues: MSVFEAWYMDEESGEDQRLPHKLSPNQPVSVQQLEHIGVFHWKLNADIYENDPELQKIREEKGYSFMDIITIHPDKLPDYQNKLKMFYEEHLHLDDEIRYILEGSSYFDVRDEGDRWIRIAVSKGDLITLPAGIYHRFTVDESNYTKAMRLFVGEPVWKAYNRPADDFDIRKEYVNSLGSS.

The Fe(2+) site is built by H91, H93, E97, and H136. Ni(2+) contacts are provided by H91, H93, E97, and H136.

This sequence belongs to the acireductone dioxygenase (ARD) family. Monomer. Interacts with MMP14. Fe(2+) serves as cofactor. The cofactor is Ni(2+).

Its subcellular location is the cytoplasm. It localises to the nucleus. The protein resides in the cell membrane. It carries out the reaction 1,2-dihydroxy-5-(methylsulfanyl)pent-1-en-3-one + O2 = 4-methylsulfanyl-2-oxobutanoate + formate + 2 H(+). The enzyme catalyses 1,2-dihydroxy-5-(methylsulfanyl)pent-1-en-3-one + O2 = 3-(methylsulfanyl)propanoate + CO + formate + 2 H(+). It participates in amino-acid biosynthesis; L-methionine biosynthesis via salvage pathway; L-methionine from S-methyl-5-thio-alpha-D-ribose 1-phosphate: step 5/6. In terms of biological role, catalyzes 2 different reactions between oxygen and the acireductone 1,2-dihydroxy-3-keto-5-methylthiopentene (DHK-MTPene) depending upon the metal bound in the active site. Fe-containing acireductone dioxygenase (Fe-ARD) produces formate and 2-keto-4-methylthiobutyrate (KMTB), the alpha-ketoacid precursor of methionine in the methionine recycle pathway. Ni-containing acireductone dioxygenase (Ni-ARD) produces methylthiopropionate, carbon monoxide and formate, and does not lie on the methionine recycle pathway. This is Acireductone dioxygenase (adi1) from Danio rerio (Zebrafish).